Here is an 87-residue protein sequence, read N- to C-terminus: Toxin CsEv3 (87 aa).

The signal sequence occupies residues 1–19 (MNSLLMITACLFLIGTVWA). The 66-residue stretch at 20-85 (KEGYLVNKST…TYPLPNKSCG (66 aa)) folds into the LCN-type CS-alpha/beta domain. 4 disulfides stabilise this stretch: C31/C84, C35/C60, C44/C65, and C48/C67. Position 84 is a cysteine amide (C84).

Belongs to the long (4 C-C) scorpion toxin superfamily. Sodium channel inhibitor family. Beta subfamily. As to expression, expressed by the venom gland.

Its subcellular location is the secreted. In terms of biological role, beta toxins bind voltage-independently at site-4 of sodium channels (Nav) and shift the voltage of activation toward more negative potentials thereby affecting sodium channel activation and promoting spontaneous and repetitive firing. Induces immediate paralysis in crickets after injection, with a total paralysis occurring within 15-30 minutes and lasting for 1-2 hours. Is also lethal to vertebrate (chicks) when injected in very high dosages (more that 100 mg/kg). This Centruroides sculpturatus (Arizona bark scorpion) protein is Toxin CsEv3.